Here is a 304-residue protein sequence, read N- to C-terminus: Bifunctional protein FolD (304 aa).

NADP(+) contacts are provided by residues 170–172, serine 195, and isoleucine 236; that span reads GRS.

This sequence belongs to the tetrahydrofolate dehydrogenase/cyclohydrolase family. As to quaternary structure, homodimer.

The enzyme catalyses (6R)-5,10-methylene-5,6,7,8-tetrahydrofolate + NADP(+) = (6R)-5,10-methenyltetrahydrofolate + NADPH. It catalyses the reaction (6R)-5,10-methenyltetrahydrofolate + H2O = (6R)-10-formyltetrahydrofolate + H(+). It functions in the pathway one-carbon metabolism; tetrahydrofolate interconversion. Functionally, catalyzes the oxidation of 5,10-methylenetetrahydrofolate to 5,10-methenyltetrahydrofolate and then the hydrolysis of 5,10-methenyltetrahydrofolate to 10-formyltetrahydrofolate. The protein is Bifunctional protein FolD of Anaplasma phagocytophilum (strain HZ).